The sequence spans 501 residues: Lysine--tRNA ligase (501 aa).

Residues D411 and E418 each contribute to the Mg(2+) site.

This sequence belongs to the class-II aminoacyl-tRNA synthetase family. In terms of assembly, homodimer. The cofactor is Mg(2+).

The protein localises to the cytoplasm. The enzyme catalyses tRNA(Lys) + L-lysine + ATP = L-lysyl-tRNA(Lys) + AMP + diphosphate. This chain is Lysine--tRNA ligase, found in Mycolicibacterium gilvum (strain PYR-GCK) (Mycobacterium gilvum (strain PYR-GCK)).